A 142-amino-acid chain; its full sequence is Large ribosomal subunit protein bL19 (142 aa).

This sequence belongs to the bacterial ribosomal protein bL19 family.

In terms of biological role, this protein is located at the 30S-50S ribosomal subunit interface and may play a role in the structure and function of the aminoacyl-tRNA binding site. The polypeptide is Large ribosomal subunit protein bL19 (Rickettsia bellii (strain OSU 85-389)).